Consider the following 176-residue polypeptide: Shikimate kinase (176 aa).

14-19 (GAGKSS) lines the ATP pocket. Ser18 contributes to the Mg(2+) binding site. Positions 36, 60, and 82 each coordinate substrate. An ATP-binding site is contributed by Arg120. Arg138 serves as a coordination point for substrate.

This sequence belongs to the shikimate kinase family. As to quaternary structure, monomer. It depends on Mg(2+) as a cofactor.

The protein resides in the cytoplasm. The enzyme catalyses shikimate + ATP = 3-phosphoshikimate + ADP + H(+). The protein operates within metabolic intermediate biosynthesis; chorismate biosynthesis; chorismate from D-erythrose 4-phosphate and phosphoenolpyruvate: step 5/7. Functionally, catalyzes the specific phosphorylation of the 3-hydroxyl group of shikimic acid using ATP as a cosubstrate. The protein is Shikimate kinase of Dehalococcoides mccartyi (strain ATCC BAA-2100 / JCM 16839 / KCTC 5957 / BAV1).